The following is a 285-amino-acid chain: Large ribosomal subunit protein uL1m (285 aa).

Residues 1–19 (MLSVVAIPKICVTGPARRC) constitute a mitochondrion transit peptide.

This sequence belongs to the universal ribosomal protein uL1 family. In terms of assembly, component of the mitochondrial large ribosomal subunit (mt-LSU). Mature yeast 74S mitochondrial ribosomes consist of a small (37S) and a large (54S) subunit. The 37S small subunit contains a 15S ribosomal RNA (15S mt-rRNA) and 34 different proteins. The 54S large subunit contains a 21S rRNA (21S mt-rRNA) and 46 different proteins.

Its subcellular location is the mitochondrion. Functionally, component of the mitochondrial ribosome (mitoribosome), a dedicated translation machinery responsible for the synthesis of mitochondrial genome-encoded proteins, including at least some of the essential transmembrane subunits of the mitochondrial respiratory chain. The mitoribosomes are attached to the mitochondrial inner membrane and translation products are cotranslationally integrated into the membrane. In Saccharomyces cerevisiae (strain ATCC 204508 / S288c) (Baker's yeast), this protein is Large ribosomal subunit protein uL1m (MRPL1).